The primary structure comprises 154 residues: Iron sulfur cluster assembly protein 1, mitochondrial (154 aa).

Belongs to the NifU family. Component of the core Fe-S cluster (ISC) assembly machinery. [2Fe-2S] cluster is required as a cofactor.

It localises to the mitochondrion matrix. It functions in the pathway cofactor biosynthesis; iron-sulfur cluster biosynthesis. Its function is as follows. Scaffold protein for the de novo synthesis of iron-sulfur (Fe-S) clusters within mitochondria, which is required for maturation of both mitochondrial and cytoplasmic [2Fe-2S] and [4Fe-4S] proteins. First, a [2Fe-2S] cluster is transiently assembled on the scaffold protein ISU1. In a second step, the cluster is released from ISU1, transferred to a glutaredoxin, followed by the formation of mitochondrial [2Fe-2S] proteins, the synthesis of [4Fe-4S] clusters and their target-specific insertion into the recipient apoproteins. Cluster assembly on ISU1 depends on the function of the cysteine desulfurase complex NFS1-ISD11, which serves as the sulfur donor for cluster synthesis, the iron-binding protein frataxin as the putative iron donor, and the electron transfer chain comprised of ferredoxin reductase and ferredoxin, which receive their electrons from NADH. In Eremothecium gossypii (strain ATCC 10895 / CBS 109.51 / FGSC 9923 / NRRL Y-1056) (Yeast), this protein is Iron sulfur cluster assembly protein 1, mitochondrial (ISU1).